We begin with the raw amino-acid sequence, 514 residues long: 1-pyrroline-5-carboxylate dehydrogenase (514 aa).

Active-site residues include Glu-286 and Cys-320.

The protein belongs to the aldehyde dehydrogenase family. RocA subfamily.

It carries out the reaction L-glutamate 5-semialdehyde + NAD(+) + H2O = L-glutamate + NADH + 2 H(+). The protein operates within amino-acid degradation; L-proline degradation into L-glutamate; L-glutamate from L-proline: step 2/2. The protein is 1-pyrroline-5-carboxylate dehydrogenase of Staphylococcus aureus (strain MRSA252).